The primary structure comprises 536 residues: Phosphoenolpyruvate carboxykinase (ATP) (536 aa).

3 residues coordinate substrate: R61, Y195, and K201. ATP is bound by residues K201, H220, and 236–244; that span reads GLSGTGKTT. Residues K201 and H220 each contribute to the Mn(2+) site. D257 provides a ligand contact to Mn(2+). Positions 285, 322, and 447 each coordinate ATP. A substrate-binding site is contributed by R322.

This sequence belongs to the phosphoenolpyruvate carboxykinase (ATP) family. Mn(2+) serves as cofactor.

It is found in the cytoplasm. The catalysed reaction is oxaloacetate + ATP = phosphoenolpyruvate + ADP + CO2. It functions in the pathway carbohydrate biosynthesis; gluconeogenesis. Involved in the gluconeogenesis. Catalyzes the conversion of oxaloacetate (OAA) to phosphoenolpyruvate (PEP) through direct phosphoryl transfer between the nucleoside triphosphate and OAA. The chain is Phosphoenolpyruvate carboxykinase (ATP) from Rhizobium leguminosarum bv. trifolii (strain WSM2304).